We begin with the raw amino-acid sequence, 124 residues long: Fluoride-specific ion channel FluC (124 aa).

4 helical membrane passes run 4 to 24 (ILFV…ISIF), 35 to 55 (FGTL…YALG), 70 to 90 (VGLL…LLLI), and 95 to 115 (WLKA…MVYL). Residues glycine 74 and threonine 77 each coordinate Na(+).

The protein belongs to the fluoride channel Fluc/FEX (TC 1.A.43) family.

It is found in the cell inner membrane. The catalysed reaction is fluoride(in) = fluoride(out). Its activity is regulated as follows. Na(+) is not transported, but it plays an essential structural role and its presence is essential for fluoride channel function. Functionally, fluoride-specific ion channel. Important for reducing fluoride concentration in the cell, thus reducing its toxicity. This chain is Fluoride-specific ion channel FluC, found in Shewanella woodyi (strain ATCC 51908 / MS32).